The primary structure comprises 913 residues: Eukaryotic translation initiation factor 3 subunit C (913 aa).

The interval 1–22 (MSRFFANGSDSESESSEEEVQA) is disordered. Acidic residues predominate over residues 11-20 (SESESSEEEV). Residues Ser-34, Ser-165, Ser-177, and Ser-186 each carry the phosphoserine modification. A disordered region spans residues 157–285 (FREAPDQESD…KRAEDDEDGE (129 aa)). The segment covering 162–171 (DQESDVEEGE) has biased composition (acidic residues). Positions 172–184 (GEPHDSDGDRAGA) are enriched in basic and acidic residues. Over residues 214-239 (DEDDSDDSIDWDSDTESETESSEDEN) the composition is skewed to acidic residues. A compositionally biased stretch (basic and acidic residues) spans 244 to 263 (MRERFLKRTTEKEDKDDDKR). Positions 264-276 (KDKRKEQKHKVRK) are enriched in basic residues. Positions 645-821 (FHMHINLELL…ETVVMHRSEP (177 aa)) constitute a PCI domain. The disordered stretch occupies residues 856 to 913 (RGNMGNRDRGYNRNQNNQGGNWGGQRRDNRNQRNRNQRGHHKQQQQQQQQQVQTIEEE). A compositionally biased stretch (basic residues) spans 887–898 (QRNRNQRGHHKQ).

Belongs to the eIF-3 subunit C family. As to quaternary structure, component of the eukaryotic translation initiation factor 3 (eIF-3) complex. The eIF-3 complex interacts with pix.

The protein localises to the cytoplasm. Functionally, component of the eukaryotic translation initiation factor 3 (eIF-3) complex, which is involved in protein synthesis of a specialized repertoire of mRNAs and, together with other initiation factors, stimulates binding of mRNA and methionyl-tRNAi to the 40S ribosome. The eIF-3 complex specifically targets and initiates translation of a subset of mRNAs involved in cell proliferation. The chain is Eukaryotic translation initiation factor 3 subunit C from Drosophila mojavensis (Fruit fly).